The sequence spans 372 residues: uncharacterized protein (372 aa).

Residues 49-72 form a disordered region; that stretch reads FSHKGGGKGGGSGAGSNDGGCSGE. The span at 55-70 shows a compositional bias: gly residues; that stretch reads GKGGGSGAGSNDGGCS.

This is an uncharacterized protein from Halorubrum lacusprofundi (strain ATCC 49239 / DSM 5036 / JCM 8891 / ACAM 34).